The following is a 191-amino-acid chain: Putative glutathione-dependent formaldehyde-activating enzyme (191 aa).

The region spanning Phe-20–Asp-166 is the CENP-V/GFA domain. The Zn(2+) site is built by Cys-27, Cys-29, Cys-48, Cys-50, Cys-53, Cys-95, and Cys-98.

It belongs to the Gfa family. It depends on Zn(2+) as a cofactor.

It catalyses the reaction S-(hydroxymethyl)glutathione = glutathione + formaldehyde. Its pathway is one-carbon metabolism; formaldehyde degradation; formate from formaldehyde (glutathione route): step 1/3. Functionally, catalyzes the condensation of formaldehyde and glutathione to S-hydroxymethylglutathione. In Aspergillus terreus (strain NIH 2624 / FGSC A1156), this protein is Putative glutathione-dependent formaldehyde-activating enzyme.